Here is a 210-residue protein sequence, read N- to C-terminus: Large ribosomal subunit protein uL3 (210 aa).

The disordered stretch occupies residues Lys-123–Ser-144.

It belongs to the universal ribosomal protein uL3 family. In terms of assembly, part of the 50S ribosomal subunit. Forms a cluster with proteins L14 and L19.

Functionally, one of the primary rRNA binding proteins, it binds directly near the 3'-end of the 23S rRNA, where it nucleates assembly of the 50S subunit. This is Large ribosomal subunit protein uL3 from Alkaliphilus metalliredigens (strain QYMF).